The primary structure comprises 346 residues: 4-amino-5-hydroxymethyl-2-methylpyrimidine phosphate synthase (346 aa).

An N6-(pyridoxal phosphate)lysine modification is found at K62. H66 is a catalytic residue. 114 to 117 (GEFG) contacts pyridoxal 5'-phosphate. Residues 194–198 (CCCFC) carry the CCCFC; essential for catalytic activity, may be the site of iron coordination motif.

The protein belongs to the NMT1/THI5 family. In terms of assembly, homodimer. The cofactor is Fe cation.

Its subcellular location is the cytoplasm. It is found in the nucleus. The enzyme catalyses N(6)-(pyridoxal phosphate)-L-lysyl-[4-amino-5-hydroxymethyl-2-methylpyrimidine phosphate synthase] + L-histidyl-[4-amino-5-hydroxymethyl-2-methylpyrimidine phosphate synthase] + 2 Fe(3+) + 4 H2O = L-lysyl-[4-amino-5-hydroxymethyl-2-methylpyrimidine phosphate synthase] + (2S)-2-amino-5-hydroxy-4-oxopentanoyl-[4-amino-5-hydroxymethyl-2-methylpyrimidine phosphate synthase] + 4-amino-2-methyl-5-(phosphooxymethyl)pyrimidine + 3-oxopropanoate + 2 Fe(2+) + 2 H(+). It functions in the pathway cofactor biosynthesis; thiamine diphosphate biosynthesis. Its function is as follows. Responsible for the formation of the pyrimidine heterocycle in the thiamine biosynthesis pathway. Catalyzes the formation of hydroxymethylpyrimidine phosphate (HMP-P) from histidine and pyridoxal phosphate (PLP). The protein uses PLP and the active site histidine to form HMP-P, generating an inactive enzyme. The enzyme can only undergo a single turnover, which suggests it is a suicide enzyme. The protein is 4-amino-5-hydroxymethyl-2-methylpyrimidine phosphate synthase of Schizosaccharomyces pombe (strain 972 / ATCC 24843) (Fission yeast).